Reading from the N-terminus, the 372-residue chain is Methylthioribose-1-phosphate isomerase 2 (372 aa).

The active-site Proton donor is the D254.

This sequence belongs to the eIF-2B alpha/beta/delta subunits family. MtnA subfamily.

It is found in the cytoplasm. Its subcellular location is the nucleus. It carries out the reaction 5-(methylsulfanyl)-alpha-D-ribose 1-phosphate = 5-(methylsulfanyl)-D-ribulose 1-phosphate. Its pathway is amino-acid biosynthesis; L-methionine biosynthesis via salvage pathway; L-methionine from S-methyl-5-thio-alpha-D-ribose 1-phosphate: step 1/6. Catalyzes the interconversion of methylthioribose-1-phosphate (MTR-1-P) into methylthioribulose-1-phosphate (MTRu-1-P). This chain is Methylthioribose-1-phosphate isomerase 2, found in Trypanosoma cruzi (strain CL Brener).